A 561-amino-acid chain; its full sequence is Septation ring formation regulator EzrA (561 aa).

Over 1–3 (MWI) the chain is Extracellular. A helical membrane pass occupies residues 4-22 (VVFSLLVLTVTFFVYGALR). Over 23–561 (RKAFYKRVDK…VLEKVQHLAG (539 aa)) the chain is Cytoplasmic. Coiled coils occupy residues 98-130 (RFQK…IQVL), 166-214 (AKVF…HLLK), and 251-465 (FAID…KLSD).

This sequence belongs to the EzrA family.

The protein resides in the cell membrane. Its function is as follows. Negative regulator of FtsZ ring formation; modulates the frequency and position of FtsZ ring formation. Inhibits FtsZ ring formation at polar sites. Interacts either with FtsZ or with one of its binding partners to promote depolymerization. The protein is Septation ring formation regulator EzrA of Halalkalibacterium halodurans (strain ATCC BAA-125 / DSM 18197 / FERM 7344 / JCM 9153 / C-125) (Bacillus halodurans).